The primary structure comprises 716 residues: MMARAAKSKPLRDVAELTKAQAKVELMRLALELEGHDKRYYQDDAPTVTDAEYDALRQRFNAIEKRFPEFVSAESPSQKVGAAPSGRFRKVRHAVPMLSLDNAFAEEDVRDFVGRIVRFLKLDDDKIDFSAEPKIDGLSMSLRYEGGELVTAATRGDGAEGEDVTANIRTLEDVPQKLKGRNVPDICEVRGEVYMTKKAFLALNERQKAAGDTIFANPRNSAAGSLRQKDPTITASRPLGFFAYAWGEMSAMPEETQTGMIHWFERCGFKTNPLTRLCHSVEELIAFHQRIEEERAELDYDIDGVVYKVDRIDWQERLGFVSRTPRWGIAHKFPAEQAMTVLRDIEIQVGRTGSFTPVGKLEPVGVGGVIVQNVTLHNEDYIKGIGNKGEVLREGRDIRIGDTVVIQRAGDVIPQVVDVVLDKRPKTAKEFHFPKTCPCPLHTDVTREETAAGEEGSRARCTGEFACPYQKIEHLKLFVSRRAFDIDGLGEKQLQYFFDEGFVKEPADIFTLEKRNAKLKLEEIEGYGATSVRNLFAAIESRRRIALERFVYALGMRHVGETTALALARGYGSWEAFHDACLKVAKGDEEAMADMDALDQIGDTVIKSIADYFGESHNRGIVERLTKEVEIVDAEKPKSNSAVAGKTVVFTGSLEKMTRDEAKATAERLGAKVSGSVSKKTDLVVAGPGAGSKLAEANKHGVKVLTEDEWLKLIGE.

NAD(+) contacts are provided by residues 50 to 54, 99 to 100, and E132; these read DAEYD and SL. Catalysis depends on K134, which acts as the N6-AMP-lysine intermediate. NAD(+) is bound by residues R155, E192, K308, and K332. Positions 437, 439, 461, and 467 each coordinate Zn(2+). One can recognise a BRCT domain in the interval 638-716; sequence KSNSAVAGKT…EDEWLKLIGE (79 aa).

The protein belongs to the NAD-dependent DNA ligase family. LigA subfamily. The cofactor is Mg(2+). Requires Mn(2+) as cofactor.

It catalyses the reaction NAD(+) + (deoxyribonucleotide)n-3'-hydroxyl + 5'-phospho-(deoxyribonucleotide)m = (deoxyribonucleotide)n+m + AMP + beta-nicotinamide D-nucleotide.. Its function is as follows. DNA ligase that catalyzes the formation of phosphodiester linkages between 5'-phosphoryl and 3'-hydroxyl groups in double-stranded DNA using NAD as a coenzyme and as the energy source for the reaction. It is essential for DNA replication and repair of damaged DNA. In Bradyrhizobium diazoefficiens (strain JCM 10833 / BCRC 13528 / IAM 13628 / NBRC 14792 / USDA 110), this protein is DNA ligase.